Consider the following 223-residue polypeptide: Phosphoribosylformylglycinamidine synthase subunit PurQ (223 aa).

Residues 2-223 form the Glutamine amidotransferase type-1 domain; the sequence is KVAIIRFPGT…LLENFINFNF (222 aa). Cys84 acts as the Nucleophile in catalysis. Catalysis depends on residues His192 and Glu194.

As to quaternary structure, part of the FGAM synthase complex composed of 1 PurL, 1 PurQ and 2 PurS subunits.

The protein localises to the cytoplasm. The enzyme catalyses N(2)-formyl-N(1)-(5-phospho-beta-D-ribosyl)glycinamide + L-glutamine + ATP + H2O = 2-formamido-N(1)-(5-O-phospho-beta-D-ribosyl)acetamidine + L-glutamate + ADP + phosphate + H(+). The catalysed reaction is L-glutamine + H2O = L-glutamate + NH4(+). Its pathway is purine metabolism; IMP biosynthesis via de novo pathway; 5-amino-1-(5-phospho-D-ribosyl)imidazole from N(2)-formyl-N(1)-(5-phospho-D-ribosyl)glycinamide: step 1/2. Part of the phosphoribosylformylglycinamidine synthase complex involved in the purines biosynthetic pathway. Catalyzes the ATP-dependent conversion of formylglycinamide ribonucleotide (FGAR) and glutamine to yield formylglycinamidine ribonucleotide (FGAM) and glutamate. The FGAM synthase complex is composed of three subunits. PurQ produces an ammonia molecule by converting glutamine to glutamate. PurL transfers the ammonia molecule to FGAR to form FGAM in an ATP-dependent manner. PurS interacts with PurQ and PurL and is thought to assist in the transfer of the ammonia molecule from PurQ to PurL. The sequence is that of Phosphoribosylformylglycinamidine synthase subunit PurQ from Campylobacter jejuni subsp. jejuni serotype O:2 (strain ATCC 700819 / NCTC 11168).